The following is a 121-amino-acid chain: ATP synthase epsilon chain (121 aa).

It belongs to the ATPase epsilon chain family. F-type ATPases have 2 components, CF(1) - the catalytic core - and CF(0) - the membrane proton channel. CF(1) has five subunits: alpha(3), beta(3), gamma(1), delta(1), epsilon(1). CF(0) has three main subunits: a, b and c.

It is found in the cell membrane. Produces ATP from ADP in the presence of a proton gradient across the membrane. The polypeptide is ATP synthase epsilon chain (Mycobacterium marinum (strain ATCC BAA-535 / M)).